The following is a 630-amino-acid chain: Pro-interleukin-16 (630 aa).

Disordered stretches follow at residues glutamate 30–threonine 268 and proline 316–threonine 343. The segment covering isoleucine 129–serine 143 has biased composition (low complexity). Residue serine 220 is modified to Phosphoserine. Residues serine 321 to threonine 343 are compositionally biased toward polar residues. The tract at residues lysine 404 to serine 500 is interaction with PPP1R12A, PPP1R12B and PPP1R12C. 2 consecutive PDZ domains span residues histidine 410 to lysine 495 and threonine 532 to lysine 617.

Homotetramer. Pro-interleukin-16 interacts (via PDZ 2 domain) with PPP1R12A, PPP1R12B and PPP1R12C. Pro-interleukin-16 interacts with GRIN2A. Pro-interleukin-16 interacts with GABPB1. Pro-interleukin-16 interacts (via PDZ 3 domain) with HDAC3.

The protein localises to the secreted. The protein resides in the cytoplasm. Its subcellular location is the nucleus. Its function is as follows. Interleukin-16 stimulates a migratory response in CD4+ lymphocytes, monocytes, and eosinophils. Primes CD4+ T-cells for IL-2 and IL-15 responsiveness. Also induces T-lymphocyte expression of interleukin 2 receptor. Ligand for CD4. In terms of biological role, pro-interleukin-16 is involved in cell cycle progression in T-cells. Appears to be involved in transcriptional regulation of SKP2 and is probably part of a transcriptional repression complex on the core promoter of the SKP2 gene. May act as a scaffold for GABPB1 (the DNA-binding subunit the GABP transcription factor complex) and HDAC3 thus maintaining transcriptional repression and blocking cell cycle progression in resting T-cells. The sequence is that of Pro-interleukin-16 (IL16) from Macaca mulatta (Rhesus macaque).